We begin with the raw amino-acid sequence, 288 residues long: Ribosomal RNA small subunit methyltransferase I (288 aa).

This sequence belongs to the methyltransferase superfamily. RsmI family.

The protein resides in the cytoplasm. The enzyme catalyses cytidine(1402) in 16S rRNA + S-adenosyl-L-methionine = 2'-O-methylcytidine(1402) in 16S rRNA + S-adenosyl-L-homocysteine + H(+). Functionally, catalyzes the 2'-O-methylation of the ribose of cytidine 1402 (C1402) in 16S rRNA. This chain is Ribosomal RNA small subunit methyltransferase I, found in Vibrio cholerae serotype O1 (strain ATCC 39315 / El Tor Inaba N16961).